A 90-amino-acid polypeptide reads, in one-letter code: Accessory gland-specific peptide 26Ab (90 aa).

The signal sequence occupies residues 1–21; it reads MNYFAVLCIFSCICLWQFSDA.

Main cells of the accessory glands of males.

It is found in the secreted. The protein resides in the extracellular space. Its function is as follows. This protein is transferred from male to female during mating and may affect egglaying and behavior after mating. The sequence is that of Accessory gland-specific peptide 26Ab (Acp26Ab) from Drosophila sechellia (Fruit fly).